The sequence spans 305 residues: UDP-3-O-acyl-N-acetylglucosamine deacetylase (305 aa).

Zn(2+)-binding residues include histidine 78, histidine 237, and aspartate 241. Residue histidine 264 is the Proton donor of the active site.

Belongs to the LpxC family. It depends on Zn(2+) as a cofactor.

The catalysed reaction is a UDP-3-O-[(3R)-3-hydroxyacyl]-N-acetyl-alpha-D-glucosamine + H2O = a UDP-3-O-[(3R)-3-hydroxyacyl]-alpha-D-glucosamine + acetate. It functions in the pathway glycolipid biosynthesis; lipid IV(A) biosynthesis; lipid IV(A) from (3R)-3-hydroxytetradecanoyl-[acyl-carrier-protein] and UDP-N-acetyl-alpha-D-glucosamine: step 2/6. Its function is as follows. Catalyzes the hydrolysis of UDP-3-O-myristoyl-N-acetylglucosamine to form UDP-3-O-myristoylglucosamine and acetate, the committed step in lipid A biosynthesis. This Burkholderia cenocepacia (strain HI2424) protein is UDP-3-O-acyl-N-acetylglucosamine deacetylase.